Reading from the N-terminus, the 591-residue chain is Protein misato homolog 1 (591 aa).

The protein belongs to the misato family.

Its subcellular location is the mitochondrion outer membrane. It is found in the cytoplasm. Its function is as follows. Involved in the regulation of mitochondrial distribution and morphology. Required for mitochondrial fusion and mitochondrial network formation. The sequence is that of Protein misato homolog 1 (msto1) from Danio rerio (Zebrafish).